Reading from the N-terminus, the 547-residue chain is Chaperonin GroEL 2 (547 aa).

Residues 30 to 33 (TLGP), K51, 87 to 91 (DGTTT), G415, 479 to 481 (NAA), and D495 each bind ATP. The interval 528-547 (KPATAGLPHGGPGGFGGPEF) is disordered. The span at 535–547 (PHGGPGGFGGPEF) shows a compositional bias: gly residues.

This sequence belongs to the chaperonin (HSP60) family. In terms of assembly, forms a cylinder of 14 subunits composed of two heptameric rings stacked back-to-back. Interacts with the co-chaperonin GroES.

It is found in the cytoplasm. The catalysed reaction is ATP + H2O + a folded polypeptide = ADP + phosphate + an unfolded polypeptide.. In terms of biological role, together with its co-chaperonin GroES, plays an essential role in assisting protein folding. The GroEL-GroES system forms a nano-cage that allows encapsulation of the non-native substrate proteins and provides a physical environment optimized to promote and accelerate protein folding. This is Chaperonin GroEL 2 from Azoarcus sp. (strain BH72).